The primary structure comprises 478 residues: Probable cytosolic Fe-S cluster assembly factor AAEL012261 (478 aa).

Residues Cys23, Cys69, Cys72, Cys75, Cys189, Cys245, Cys396, and Cys400 each coordinate [4Fe-4S] cluster.

It belongs to the NARF family.

Component of the cytosolic iron-sulfur (Fe/S) protein assembly machinery. Required for maturation of extramitochondrial Fe/S proteins. In Aedes aegypti (Yellowfever mosquito), this protein is Probable cytosolic Fe-S cluster assembly factor AAEL012261.